Reading from the N-terminus, the 281-residue chain is Large ribosomal subunit protein uL2 (281 aa).

The interval 213–281 is disordered; sequence RNRHKGIRPT…LIIRRRKESK (69 aa).

The protein belongs to the universal ribosomal protein uL2 family. Part of the 50S ribosomal subunit. Forms a bridge to the 30S subunit in the 70S ribosome.

Functionally, one of the primary rRNA binding proteins. Required for association of the 30S and 50S subunits to form the 70S ribosome, for tRNA binding and peptide bond formation. It has been suggested to have peptidyltransferase activity; this is somewhat controversial. Makes several contacts with the 16S rRNA in the 70S ribosome. The sequence is that of Large ribosomal subunit protein uL2 from Mycoplasmopsis pulmonis (strain UAB CTIP) (Mycoplasma pulmonis).